The chain runs to 255 residues: Proliferating cell nuclear antigen 2 (255 aa).

The DNA-binding element occupies 61-80 (HCDRNVSLGLDLKSLGKVLK).

The protein belongs to the PCNA family. Homotrimer. Interacts with the catalytic subunits of two DNA polymerase complexes: PolD1 in the delta complex and PolE1/DNApol-epsilon255 in the epsilon complex.

The protein resides in the nucleus. It localises to the chromosome. It is found in the cytoplasm. Functionally, likely to be an auxiliary protein of DNA polymerase delta complex and is probably involved in the control of DNA replication and repair by increasing the polymerase's processibility. May function independently of PCNA during DNA repair. This Drosophila melanogaster (Fruit fly) protein is Proliferating cell nuclear antigen 2.